The chain runs to 249 residues: Vitamin B12 import ATP-binding protein BtuD (249 aa).

Residues 5 to 233 (MQLQDVAETT…PNLAQAYGMN (229 aa)) enclose the ABC transporter domain. 33–40 (GPNGAGKS) is a binding site for ATP.

It belongs to the ABC transporter superfamily. Vitamin B12 importer (TC 3.A.1.13.1) family. The complex is composed of two ATP-binding proteins (BtuD), two transmembrane proteins (BtuC) and a solute-binding protein (BtuF).

Its subcellular location is the cell inner membrane. It catalyses the reaction an R-cob(III)alamin(out) + ATP + H2O = an R-cob(III)alamin(in) + ADP + phosphate + H(+). Its function is as follows. Part of the ABC transporter complex BtuCDF involved in vitamin B12 import. Responsible for energy coupling to the transport system. The protein is Vitamin B12 import ATP-binding protein BtuD of Citrobacter koseri (strain ATCC BAA-895 / CDC 4225-83 / SGSC4696).